A 275-amino-acid chain; its full sequence is 2,3,4,5-tetrahydropyridine-2,6-dicarboxylate N-succinyltransferase (275 aa).

The protein belongs to the transferase hexapeptide repeat family.

The protein localises to the cytoplasm. It carries out the reaction (S)-2,3,4,5-tetrahydrodipicolinate + succinyl-CoA + H2O = (S)-2-succinylamino-6-oxoheptanedioate + CoA. Its pathway is amino-acid biosynthesis; L-lysine biosynthesis via DAP pathway; LL-2,6-diaminopimelate from (S)-tetrahydrodipicolinate (succinylase route): step 1/3. The protein is 2,3,4,5-tetrahydropyridine-2,6-dicarboxylate N-succinyltransferase of Paraburkholderia phymatum (strain DSM 17167 / CIP 108236 / LMG 21445 / STM815) (Burkholderia phymatum).